A 392-amino-acid chain; its full sequence is Alkaline phosphatase L (392 aa).

The signal sequence occupies residues 1–23; it reads MYKRSLIAASLSVAALVSAQAMA.

The protein belongs to the PstS family. In terms of assembly, homodimer.

Its subcellular location is the secreted. The protein localises to the periplasm. The enzyme catalyses a phosphate monoester + H2O = an alcohol + phosphate. Functionally, has both a phosphomonoesterase and phosphodiesterase activity. This Pseudomonas aeruginosa protein is Alkaline phosphatase L.